Consider the following 241-residue polypeptide: Beta-nerve growth factor (241 aa).

Residues methionine 1–alanine 18 form the signal peptide. A propeptide spanning residues glutamate 19–arginine 121 is cleaved from the precursor. N-linked (GlcNAc...) asparagine glycans are attached at residues asparagine 69, asparagine 114, and asparagine 166. Cystine bridges form between cysteine 136–cysteine 201, cysteine 179–cysteine 229, and cysteine 189–cysteine 231. A 1-acyl-sn-glycero-3-phospho-(1D-myo-inositol) contacts are provided by tyrosine 173 and lysine 209. Lysine 209 serves as a coordination point for a 1-acyl-sn-glycero-3-phospho-L-serine.

It belongs to the NGF-beta family. As to quaternary structure, homodimer. The homodimer interacts with a single NTRK1 chain. The homodimer interacts with a single NGFR chain. The NGF dimer interacts with a single SORCS2 chain (via extracellular domain). The NGF precursor (proNGF) binds to a receptor complex formed by SORT1 and NGFR, which leads to NGF endocytosis. Both mature NGF and the immature NGF precursor (proNGF) interact with SORCS2 and with the heterodimer formed by SORCS2 and NGFR (via extracellular domains). The NGF precursor (proNGF) has much higher affinity for SORCS2 than mature NGF. The NGF precursor (proNGF) has much higher affinity for SORT1 than mature NGF. Interacts with ADAM10 in a divalent cation-dependent manner. Interacts with SORCS3.

It localises to the secreted. The protein localises to the endosome lumen. In terms of biological role, nerve growth factor is important for the development and maintenance of the sympathetic and sensory nervous systems. Extracellular ligand for the NTRK1 and NGFR receptors, activates cellular signaling cascades to regulate neuronal proliferation, differentiation and survival. The immature NGF precursor (proNGF) functions as a ligand for the heterodimeric receptor formed by SORCS2 and NGFR, and activates cellular signaling cascades that lead to inactivation of RAC1 and/or RAC2, reorganization of the actin cytoskeleton and neuronal growth cone collapse. In contrast to mature NGF, the precursor form (proNGF) promotes neuronal apoptosis (in vitro). Inhibits metalloproteinase-dependent proteolysis of platelet glycoprotein VI. Binds lysophosphatidylinositol and lysophosphatidylserine between the two chains of the homodimer. The lipid-bound form promotes histamine relase from mast cells, contrary to the lipid-free form. The polypeptide is Beta-nerve growth factor (NGF) (Gorilla gorilla gorilla (Western lowland gorilla)).